The sequence spans 445 residues: Exodeoxyribonuclease 7 large subunit (445 aa).

It belongs to the XseA family. As to quaternary structure, heterooligomer composed of large and small subunits.

The protein resides in the cytoplasm. It carries out the reaction Exonucleolytic cleavage in either 5'- to 3'- or 3'- to 5'-direction to yield nucleoside 5'-phosphates.. In terms of biological role, bidirectionally degrades single-stranded DNA into large acid-insoluble oligonucleotides, which are then degraded further into small acid-soluble oligonucleotides. The chain is Exodeoxyribonuclease 7 large subunit from Xanthomonas axonopodis pv. citri (strain 306).